The sequence spans 440 residues: tRNA-2-methylthio-N(6)-dimethylallyladenosine synthase (440 aa).

The region spanning 2 to 118 (PKYYIITYGC…LPKILESLDG (117 aa)) is the MTTase N-terminal domain. [4Fe-4S] cluster contacts are provided by cysteine 11, cysteine 47, cysteine 81, cysteine 155, cysteine 159, and cysteine 162. In terms of domain architecture, Radical SAM core spans 141 to 370 (RENKFQAWIP…ENLQRKIIYE (230 aa)). The TRAM domain maps to 373–436 (LSRVGKEEIV…LWSLKGEVIR (64 aa)).

The protein belongs to the methylthiotransferase family. MiaB subfamily. In terms of assembly, monomer. [4Fe-4S] cluster serves as cofactor.

The protein localises to the cytoplasm. It carries out the reaction N(6)-dimethylallyladenosine(37) in tRNA + (sulfur carrier)-SH + AH2 + 2 S-adenosyl-L-methionine = 2-methylsulfanyl-N(6)-dimethylallyladenosine(37) in tRNA + (sulfur carrier)-H + 5'-deoxyadenosine + L-methionine + A + S-adenosyl-L-homocysteine + 2 H(+). Its function is as follows. Catalyzes the methylthiolation of N6-(dimethylallyl)adenosine (i(6)A), leading to the formation of 2-methylthio-N6-(dimethylallyl)adenosine (ms(2)i(6)A) at position 37 in tRNAs that read codons beginning with uridine. This is tRNA-2-methylthio-N(6)-dimethylallyladenosine synthase from Dictyoglomus thermophilum (strain ATCC 35947 / DSM 3960 / H-6-12).